The following is a 492-amino-acid chain: Protein nucleotidyltransferase YdiU (492 aa).

Residues Gly88, Gly90, Arg91, Lys111, Asp123, Gly124, Arg174, and Arg181 each contribute to the ATP site. The Proton acceptor role is filled by Asp250. Residues Asn251 and Asp260 each coordinate Mg(2+). Residue Asp260 participates in ATP binding.

This sequence belongs to the SELO family. Mg(2+) serves as cofactor. It depends on Mn(2+) as a cofactor.

It catalyses the reaction L-seryl-[protein] + ATP = 3-O-(5'-adenylyl)-L-seryl-[protein] + diphosphate. The enzyme catalyses L-threonyl-[protein] + ATP = 3-O-(5'-adenylyl)-L-threonyl-[protein] + diphosphate. The catalysed reaction is L-tyrosyl-[protein] + ATP = O-(5'-adenylyl)-L-tyrosyl-[protein] + diphosphate. It carries out the reaction L-histidyl-[protein] + UTP = N(tele)-(5'-uridylyl)-L-histidyl-[protein] + diphosphate. It catalyses the reaction L-seryl-[protein] + UTP = O-(5'-uridylyl)-L-seryl-[protein] + diphosphate. The enzyme catalyses L-tyrosyl-[protein] + UTP = O-(5'-uridylyl)-L-tyrosyl-[protein] + diphosphate. Its function is as follows. Nucleotidyltransferase involved in the post-translational modification of proteins. It can catalyze the addition of adenosine monophosphate (AMP) or uridine monophosphate (UMP) to a protein, resulting in modifications known as AMPylation and UMPylation. This is Protein nucleotidyltransferase YdiU from Rhodopseudomonas palustris (strain ATCC BAA-98 / CGA009).